Consider the following 466-residue polypeptide: MTDTQNPKSSNQMWGGRFADGPDAIMEAINASIGFDKRMAAQDIAGSRAHAAMLGATGIVEPSDAQAMGEGLLTVLSEIEAGNFPFSTALEDIHMNVEARLKEIIGEPAGRLHTGRSRNDQVATDFKLWVRDQLDACEAGLLALIRALLDQAEAGADWVMPGFTHLQTAQPVTWGHHMMAYVEMFGRDLSRVRDARARMNESPLGAAALAGTSFPIDRHMTAQALGFDRPAANSLDAVSDRDFALEFLSTASICAMHLSRFAEELVIWSSAQFRFVALSDRFSTGSSIMPQKKNPDAAELIRAKVGRIFGANTALMMVMKGLPLAYSKDMQEDKEQVFDAADNLMLALAAMTGMVSDMTANRESLAQAAGSGFSTATDLADWLVRVLGLPFREAHHVTGALVALAEAKHCDLPDLTLEDMRGVHAGITGDVFDVLGVENSVQSRISYGGTAPVRVREQIARWRALL.

This sequence belongs to the lyase 1 family. Argininosuccinate lyase subfamily.

Its subcellular location is the cytoplasm. It carries out the reaction 2-(N(omega)-L-arginino)succinate = fumarate + L-arginine. Its pathway is amino-acid biosynthesis; L-arginine biosynthesis; L-arginine from L-ornithine and carbamoyl phosphate: step 3/3. This is Argininosuccinate lyase from Roseobacter denitrificans (strain ATCC 33942 / OCh 114) (Erythrobacter sp. (strain OCh 114)).